Here is a 279-residue protein sequence, read N- to C-terminus: Pantothenate synthetase (279 aa).

Position 31-38 (31-38 (MGALHEGH)) interacts with ATP. Histidine 38 serves as the catalytic Proton donor. (R)-pantoate is bound at residue glutamine 62. Glutamine 62 is a beta-alanine binding site. An ATP-binding site is contributed by 148 to 151 (GEKD). Residue glutamine 154 participates in (R)-pantoate binding. ATP is bound by residues valine 177 and 185–188 (LSSR).

This sequence belongs to the pantothenate synthetase family. Homodimer.

It localises to the cytoplasm. The catalysed reaction is (R)-pantoate + beta-alanine + ATP = (R)-pantothenate + AMP + diphosphate + H(+). Its pathway is cofactor biosynthesis; (R)-pantothenate biosynthesis; (R)-pantothenate from (R)-pantoate and beta-alanine: step 1/1. Its function is as follows. Catalyzes the condensation of pantoate with beta-alanine in an ATP-dependent reaction via a pantoyl-adenylate intermediate. In Cereibacter sphaeroides (strain ATCC 17023 / DSM 158 / JCM 6121 / CCUG 31486 / LMG 2827 / NBRC 12203 / NCIMB 8253 / ATH 2.4.1.) (Rhodobacter sphaeroides), this protein is Pantothenate synthetase.